The primary structure comprises 124 residues: Small ribosomal subunit protein bS6 (124 aa).

This sequence belongs to the bacterial ribosomal protein bS6 family.

Binds together with bS18 to 16S ribosomal RNA. The protein is Small ribosomal subunit protein bS6 of Haemophilus ducreyi (strain 35000HP / ATCC 700724).